A 1084-amino-acid chain; its full sequence is Cellulose synthase A catalytic subunit 6 [UDP-forming] (1084 aa).

Position 1 is an N-acetylmethionine (Met1). Residues Met1–Met277 are Cytoplasmic-facing. Residues Cys39, Cys42, Cys58, Cys61, Cys66, Cys69, Cys81, and Cys84 each coordinate Zn(2+). The RING-type; degenerate zinc-finger motif lies at Cys39–Lys85. The helical transmembrane segment at Leu278–Val298 threads the bilayer. At Lys299 to Asp300 the chain is on the extracellular side. Residues Ala301–Leu321 traverse the membrane as a helical segment. Over Asp322–Ser868 the chain is Cytoplasmic. Residues Ser360, Lys366, Glu367, and Asp396 each contribute to the UDP-alpha-D-glucose site. Residue Asp396 is part of the active site. Residues Val450–Lys476 adopt a coiled-coil conformation. Lys537 is a UDP-alpha-D-glucose binding site. Mn(2+)-binding residues include Lys538 and Asp562. Residues Arg675–Glu703 are a coiled coil. Residue Asp785 is part of the active site. Residues Leu869–Val889 traverse the membrane as a helical segment. At Pro890 to Asn894 the chain is on the extracellular side. A helical transmembrane segment spans residues Tyr895–Met915. Residues Gln916–Gln930 are Cytoplasmic-facing. Residues Phe931 to Val951 traverse the membrane as a helical segment. Topologically, residues Leu952–Thr980 are extracellular. A glycan (N-linked (GlcNAc...) asparagine) is linked at Asn958. The helical transmembrane segment at Ser981–Val1001 threads the bilayer. Topologically, residues Ser1002 to Trp1012 are cytoplasmic. The helical transmembrane segment at Gly1013–Leu1033 threads the bilayer. Over Lys1034 to Arg1042 the chain is Extracellular. A helical membrane pass occupies residues Met1043–Val1063. At Arg1064–Leu1084 the chain is on the cytoplasmic side.

Belongs to the glycosyltransferase 2 family. Plant cellulose synthase subfamily. In terms of assembly, interacts with CESA1 and CESA3. Interacts with STL1 and STL2, but not with GOT1. Binds to CSI1 and CSI3. Interacts with PAT24/TIP1. The cofactor is Zn(2+). Requires Mn(2+) as cofactor. S-acylated. In terms of tissue distribution, expressed in germinating seeds, seedlings, roots, stems, leaves and flowers. Not present in mature flowers.

Its subcellular location is the cell membrane. It catalyses the reaction [(1-&gt;4)-beta-D-glucosyl](n) + UDP-alpha-D-glucose = [(1-&gt;4)-beta-D-glucosyl](n+1) + UDP + H(+). It participates in glycan metabolism; plant cellulose biosynthesis. Catalytic subunit of cellulose synthase terminal complexes ('rosettes'), required for beta-1,4-glucan microfibril crystallization, a major mechanism of the cell wall formation. Involved in the primary cell wall formation. The presence of each protein CESA1 and CESA6 is critical for cell expansion. The hypocotyl elongation is based on a CESA6-dependent cell elongation in dark and a CESA6-independent cell elongation in light. The transition between these two mechanisms requires photosynthesis and PHYB, but not CRY1. The CESA6-dependent cell elongation seems to be independent of gibberellic acid, auxin and ethylene. May be involved in sensitivity to isoxaben. Associates with and moves along cortical microtubules for the process of cellulose deposition. This is Cellulose synthase A catalytic subunit 6 [UDP-forming] from Arabidopsis thaliana (Mouse-ear cress).